We begin with the raw amino-acid sequence, 173 residues long: Nuclear transcription factor Y subunit B-8 (173 aa).

The interval 1–30 (MAESQAKSPGGCGSHESGGDQSPRSLHVRE) is disordered. Ala2 is subject to N-acetylalanine. The DNA-binding element occupies 35–41 (LPIANIS). Residues 62 to 73 (VQECVSEFISFV) are subunit association domain (SAD). The tract at residues 123-173 (DTKGSAKGGDPNAKKDGQSSQNGQFSQLAHQGPYGNSQAQQHMMVPMPGTD) is disordered. A compositionally biased stretch (polar residues) spans 140 to 163 (QSSQNGQFSQLAHQGPYGNSQAQQ).

This sequence belongs to the NFYB/HAP3 subunit family. As to quaternary structure, heterotrimeric transcription factor composed of three components, NF-YA, NF-YB and NF-YC. NF-YB and NF-YC must interact and dimerize for NF-YA association and DNA binding. In terms of tissue distribution, expressed in flowers and mature rosettes.

It localises to the nucleus. Functionally, component of the NF-Y/HAP transcription factor complex. The NF-Y complex stimulates the transcription of various genes by recognizing and binding to a CCAAT motif in promoters. The chain is Nuclear transcription factor Y subunit B-8 (NFYB8) from Arabidopsis thaliana (Mouse-ear cress).